The chain runs to 245 residues: Acetylglutamate kinase (245 aa).

Substrate-binding positions include 41–42 (GG), arginine 63, and asparagine 156.

It belongs to the acetylglutamate kinase family. ArgB subfamily.

It is found in the cytoplasm. It carries out the reaction N-acetyl-L-glutamate + ATP = N-acetyl-L-glutamyl 5-phosphate + ADP. It participates in amino-acid biosynthesis; L-arginine biosynthesis; N(2)-acetyl-L-ornithine from L-glutamate: step 2/4. Catalyzes the ATP-dependent phosphorylation of N-acetyl-L-glutamate. This is Acetylglutamate kinase from Streptococcus mutans serotype c (strain ATCC 700610 / UA159).